The chain runs to 116 residues: Urease subunit beta (116 aa).

A disordered region spans residues 97-116; it reads IQGPLDAGTAETAPGLPQQP.

The protein belongs to the urease beta subunit family. In terms of assembly, heterotrimer of UreA (gamma), UreB (beta) and UreC (alpha) subunits. Three heterotrimers associate to form the active enzyme.

Its subcellular location is the cytoplasm. It carries out the reaction urea + 2 H2O + H(+) = hydrogencarbonate + 2 NH4(+). It participates in nitrogen metabolism; urea degradation; CO(2) and NH(3) from urea (urease route): step 1/1. This chain is Urease subunit beta, found in Paracidovorax citrulli (strain AAC00-1) (Acidovorax citrulli).